Here is a 1434-residue protein sequence, read N- to C-terminus: Receptor-type tyrosine-protein phosphatase U (1434 aa).

The first 17 residues, 1–17, serve as a signal peptide directing secretion; sequence MRSARALLLALALRVCA. Over 18 to 748 the chain is Extracellular; the sequence is LDSETPSAGC…QHSEEMGLIL (731 aa). One can recognise an MAM domain in the interval 25–187; it reads AGCTFEEDDD…ILLLNYPCSK (163 aa). The N-linked (GlcNAc...) asparagine glycan is linked to Asn-74. The Ig-like C2-type domain occupies 189-274; the sequence is PHFSRLGDVE…TQSSRGSGVS (86 aa). Cysteines 209 and 263 form a disulfide. Fibronectin type-III domains follow at residues 287–382, 385–483, 484–590, and 597–677; these read PIAP…CAEP, APKG…TDED, VPGG…SAPT, and PSPL…TEAK. The N-linked (GlcNAc...) asparagine glycan is linked to Asn-409. Residue Asn-684 is glycosylated (N-linked (GlcNAc...) asparagine). The chain crosses the membrane as a helical span at residues 749–769; it reads GICAGGLVVLIILLGAIIVVI. Residues 770-1434 lie on the Cytoplasmic side of the membrane; sequence RKGKPVNMTK…LEYLESLETR (665 aa). Over residues 824-839 the composition is skewed to polar residues; the sequence is RGDQRSSVVNESSSLL. The interval 824–851 is disordered; sequence RGDQRSSVVNESSSLLGGSPRRQCGRKG. Tyrosine-protein phosphatase domains follow at residues 876–1132 and 1164–1427; these read KTAE…ILEA and LREE…ALEY. Substrate contacts are provided by residues Glu-1041, 1073–1079, and Gln-1117; that span reads CSAGTGR. Cys-1073 (phosphocysteine intermediate) is an active-site residue. Cys-1368 serves as the catalytic Phosphocysteine intermediate.

Belongs to the protein-tyrosine phosphatase family. Receptor class 2B subfamily.

It localises to the cell junction. Its subcellular location is the cell membrane. It catalyses the reaction O-phospho-L-tyrosyl-[protein] + H2O = L-tyrosyl-[protein] + phosphate. Its function is as follows. Tyrosine-protein phosphatase which dephosphorylates CTNNB1. May function in cell proliferation and migration and play a role in the maintenance of epithelial integrity. The chain is Receptor-type tyrosine-protein phosphatase U (PTPRU) from Gallus gallus (Chicken).